Here is a 435-residue protein sequence, read N- to C-terminus: Putative GMP synthase [glutamine-hydrolyzing] 2 (435 aa).

One can recognise a Glutamine amidotransferase type-1; truncated domain in the interval 1-120 (MKQDMIVILD…VFDTCQAEAN (120 aa)). In terms of domain architecture, GMPS ATP-PPase spans 121 to 310 (WNMANFVNDQ…LGLPYEMVYR (190 aa)). Residue 148–154 (SGGVDSS) participates in ATP binding.

As to quaternary structure, homodimer.

The catalysed reaction is XMP + L-glutamine + ATP + H2O = GMP + L-glutamate + AMP + diphosphate + 2 H(+). The protein operates within purine metabolism; GMP biosynthesis; GMP from XMP (L-Gln route): step 1/1. Its function is as follows. Catalyzes the synthesis of GMP from XMP. This Bacteroides thetaiotaomicron (strain ATCC 29148 / DSM 2079 / JCM 5827 / CCUG 10774 / NCTC 10582 / VPI-5482 / E50) protein is Putative GMP synthase [glutamine-hydrolyzing] 2 (guaA2).